A 431-amino-acid chain; its full sequence is Phosphoribosylamine--glycine ligase (431 aa).

Residues 107–315 (RWLMEEYKIP…LVEIGEEIVD (209 aa)) enclose the ATP-grasp domain. 134 to 193 (IDDFGRPVVVKPLGLTGGKGVKVVGYQLKDNEEAKAYAEELIKRDGKVLIEERTDGVEFT) provides a ligand contact to ATP. Residues Gln-273, Glu-285, and Asn-287 each contribute to the Mg(2+) site. Mn(2+) contacts are provided by Gln-273, Glu-285, and Asn-287.

It belongs to the GARS family. It depends on Mg(2+) as a cofactor. Requires Mn(2+) as cofactor.

The enzyme catalyses 5-phospho-beta-D-ribosylamine + glycine + ATP = N(1)-(5-phospho-beta-D-ribosyl)glycinamide + ADP + phosphate + H(+). The protein operates within purine metabolism; IMP biosynthesis via de novo pathway; N(1)-(5-phospho-D-ribosyl)glycinamide from 5-phospho-alpha-D-ribose 1-diphosphate: step 2/2. The chain is Phosphoribosylamine--glycine ligase from Thermococcus kodakarensis (strain ATCC BAA-918 / JCM 12380 / KOD1) (Pyrococcus kodakaraensis (strain KOD1)).